A 544-amino-acid polypeptide reads, in one-letter code: Transcription factor bHLH119 (544 aa).

Disordered regions lie at residues 12-59 (NGQV…QPPR) and 185-208 (VAST…PPSV). A compositionally biased stretch (polar residues) spans 15–29 (VVRTSQPQRPSSGKP). A compositionally biased stretch (pro residues) spans 50–59 (LPLPLLQPPR). Thr269 bears the Phosphothreonine mark. Ser274 carries the post-translational modification Phosphoserine. Disordered regions lie at residues 342–364 (QGTE…MHNL) and 522–544 (QPPL…STSK). The bHLH domain maps to 357–406 (RAADMHNLSERRRRERINERMKTLQELLPRCRKTDKVSMLEDVIEYVKSL). Residues 522 to 535 (QPPLPLQGQPTSQP) show a composition bias toward low complexity. Ser541 and Ser543 each carry phosphoserine.

As to quaternary structure, homodimer.

The protein localises to the nucleus. In Arabidopsis thaliana (Mouse-ear cress), this protein is Transcription factor bHLH119 (BHLH119).